Here is a 322-residue protein sequence, read N- to C-terminus: Ribosomal RNA small subunit methyltransferase H (322 aa).

Residues 47 to 49 (GGH), D67, F93, D112, and Q119 each bind S-adenosyl-L-methionine.

This sequence belongs to the methyltransferase superfamily. RsmH family.

It localises to the cytoplasm. It carries out the reaction cytidine(1402) in 16S rRNA + S-adenosyl-L-methionine = N(4)-methylcytidine(1402) in 16S rRNA + S-adenosyl-L-homocysteine + H(+). Its function is as follows. Specifically methylates the N4 position of cytidine in position 1402 (C1402) of 16S rRNA. In Stenotrophomonas maltophilia (strain K279a), this protein is Ribosomal RNA small subunit methyltransferase H.